We begin with the raw amino-acid sequence, 400 residues long: Subtilisin-like protease CPC735_047380 (400 aa).

The first 19 residues, 1–19 (MARINVVVSFLAALAVVQA), serve as a signal peptide directing secretion. The propeptide occupies 20–118 (AQLLNLDGQK…IEPQRTFRAF (99 aa)). The 82-residue stretch at 35–116 (SYVVVMNDGL…NYIEPQRTFR (82 aa)) folds into the Inhibitor I9 domain. The 273-residue stretch at 128–400 (SWGLGRISHT…DKLLYNGSGQ (273 aa)) folds into the Peptidase S8 domain. Asn-153 carries N-linked (GlcNAc...) asparagine glycosylation. Active-site charge relay system residues include Asp-160 and His-191. Residues Asn-244 and Asn-252 are each glycosylated (N-linked (GlcNAc...) asparagine). Ser-346 acts as the Charge relay system in catalysis. Asn-396 is a glycosylation site (N-linked (GlcNAc...) asparagine).

Belongs to the peptidase S8 family.

Its subcellular location is the secreted. Its function is as follows. Secreted subtilisin-like serine protease with keratinolytic activity that contributes to pathogenicity. The polypeptide is Subtilisin-like protease CPC735_047380 (Coccidioides posadasii (strain C735) (Valley fever fungus)).